The chain runs to 443 residues: uncharacterized protein (443 aa).

Positions 1-21 (MQSVTPPPTQQGKPDPTNSDM) are disordered. Positions 10-20 (QQGKPDPTNSD) are enriched in polar residues.

This is an uncharacterized protein from Caenorhabditis elegans.